A 512-amino-acid polypeptide reads, in one-letter code: Probable multidrug resistance protein EmrY (512 aa).

The Cytoplasmic segment spans residues 1–8 (MAITKSTP). A helical transmembrane segment spans residues 9 to 29 (APLTGGTLWCVTIALSLATFM). Position 30 (Gln30) is a topological domain, periplasmic. Residues 31 to 51 (MLDSTISNVAIPTISGFLGAS) form a helical membrane-spanning segment. The Cytoplasmic portion of the chain corresponds to 52–53 (TD). A helical membrane pass occupies residues 54 to 74 (EGTWVITSFGVANAIAIPVTG). At 75–84 (RLAQRIGELR) the chain is on the periplasmic side. Transmembrane regions (helical) follow at residues 85-105 (LFLLSVTFFSLSSLMCSLSTN) and 106-126 (LDVLIFFRVVQGLMAGPLIPL). Over 127–141 (SQSLLLRNYPPEKRT) the chain is Periplasmic. Residues 142 to 162 (FALALWSMTVIIAPICGPILG) form a helical membrane-spanning segment. Residues 163–172 (GYICDNFSWG) lie on the Cytoplasmic side of the membrane. The chain crosses the membrane as a helical span at residues 173–193 (WIFLINVPMGIIVLTLCLTLL). The Periplasmic portion of the chain corresponds to 194 to 204 (KGRETETSPVK). A helical transmembrane segment spans residues 205–225 (MNLPGLTLLVLGVGGLQIMLD). Over 226–234 (KGRDLDWFN) the chain is Cytoplasmic. Residues 235-255 (SSTIIILTVVSVISLISLVIW) form a helical membrane-spanning segment. The Periplasmic segment spans residues 256-273 (ESTSENPILDLSLFKSRN). The helical transmembrane segment at 274–294 (FTIGIVSITCAYLFYSGAIVL) threads the bilayer. The Cytoplasmic segment spans residues 295-307 (MPQLLQETMGYNA). The helical transmembrane segment at 308–328 (IWAGLAYAPIGIMPLLISPLI) threads the bilayer. Residues 329–338 (GRYGNKIDMR) lie on the Periplasmic side of the membrane. The helical transmembrane segment at 339 to 359 (LLVTFSFLMYAVCYYWRSVTF) threads the bilayer. The Cytoplasmic segment spans residues 360–364 (MPTID). The chain crosses the membrane as a helical span at residues 365–385 (FTGIILPQFFQGFAVACFFLP). Residues 386–486 (LTTISFSGLP…LSISANEIFR (101 aa)) are Periplasmic-facing. A helical transmembrane segment spans residues 487–507 (MAAIAFILLTVLVWFAKPPFT). At 508–512 (AKGVG) the chain is on the cytoplasmic side.

It belongs to the major facilitator superfamily. EmrB family. Part of the tripartite efflux system EmrYK-TolC, which is composed of an inner membrane transporter, EmrY, a membrane fusion protein, EmrK, and an outer membrane component, TolC. The complex forms a large protein conduit and can translocate molecules across both the inner and outer membranes.

The protein localises to the cell inner membrane. Its function is as follows. Part of the tripartite efflux system EmrYK-TolC, which confers resistance to various drugs. The sequence is that of Probable multidrug resistance protein EmrY (emrY) from Escherichia coli (strain K12).